A 464-amino-acid polypeptide reads, in one-letter code: MSTDKTNQSWGGRFSEPVDAFVARFTASVDFDKRLYRHDIMGSIAHATMLAQVGVLNDKERDTIIDGLKTIQGEIEAGNFDWRVDLEDVHMNIEARLTDRIGITGKKLHTGRSRNDQVATDIRLWLRDEIDIILGEITRLQQGLLEQAEREAETIMPGFTHLQTAQPVTFGHHLLAWFEMLSRDYERLVDCRKRANRMPLGSAALAGTTYPIDRELTCKLLGFEAVAGNSLDGVSDRDFAIEFCAAASIAMMHLSRFSEELVLWTSAQFQFIDLPDRFCTGSSIMPQKKNPDVPELVRGKTGRVFGALTGLLTLMKGQPLAYNKDNQEDKEPLFDAADTLRDSLRAFADMIPAIKPKHAIMREAALRGFSTATDLADYLVRRGLPFRDCHEIVGHAVKYGVDTGKDLAEMSLDELRQFSDQIEQDVFAVLTLEGSVNARNHIGGTAPAQVRAAVARGKALLASR.

The protein belongs to the lyase 1 family. Argininosuccinate lyase subfamily.

It is found in the cytoplasm. It catalyses the reaction 2-(N(omega)-L-arginino)succinate = fumarate + L-arginine. The protein operates within amino-acid biosynthesis; L-arginine biosynthesis; L-arginine from L-ornithine and carbamoyl phosphate: step 3/3. The protein is Argininosuccinate lyase of Pseudomonas entomophila (strain L48).